Consider the following 243-residue polypeptide: UPF0758 protein Cyan7425_1778 (243 aa).

Residues 112-235 form the MPN domain; sequence TIINDPAVAA…FRSLRQTTKL (124 aa). Zn(2+) is bound by residues histidine 184, histidine 186, and aspartate 197. A JAMM motif motif is present at residues 184–197; it reads HNHPSGNVEPSPED.

The protein belongs to the UPF0758 family.

The polypeptide is UPF0758 protein Cyan7425_1778 (Cyanothece sp. (strain PCC 7425 / ATCC 29141)).